A 342-amino-acid chain; its full sequence is GTPase Obg (342 aa).

The 159-residue stretch at 1–159 (MQFIDQAQIE…KLLRLELKLL (159 aa)) folds into the Obg domain. The 171-residue stretch at 160–330 (AEVGIIGLPN…MLQEVWGILD (171 aa)) folds into the OBG-type G domain. Residues 166 to 173 (GLPNAGKS), 191 to 195 (FTTLI), 213 to 216 (DIPG), 280 to 283 (NKID), and 311 to 313 (SAV) each bind GTP. Positions 173 and 193 each coordinate Mg(2+).

This sequence belongs to the TRAFAC class OBG-HflX-like GTPase superfamily. OBG GTPase family. In terms of assembly, monomer. Mg(2+) serves as cofactor.

Its subcellular location is the cytoplasm. Its function is as follows. An essential GTPase which binds GTP, GDP and possibly (p)ppGpp with moderate affinity, with high nucleotide exchange rates and a fairly low GTP hydrolysis rate. Plays a role in control of the cell cycle, stress response, ribosome biogenesis and in those bacteria that undergo differentiation, in morphogenesis control. The sequence is that of GTPase Obg from Trichormus variabilis (strain ATCC 29413 / PCC 7937) (Anabaena variabilis).